The sequence spans 176 residues: uncharacterized protein (176 aa).

A disordered region spans residues 71-176 (RDDMSSDSDG…YSTDDDEDDY (106 aa)). Composition is skewed to low complexity over residues 77 to 87 (DSDGPAASPPG) and 100 to 109 (SYSSSDSSAR). A compositionally biased stretch (basic residues) spans 140–152 (KARRPARKKKRIG).

This is an uncharacterized protein from Orgyia pseudotsugata multicapsid polyhedrosis virus (OpMNPV).